Here is a 796-residue protein sequence, read N- to C-terminus: Probable phosphoketolase (796 aa).

This sequence belongs to the XFP family. Thiamine diphosphate is required as a cofactor.

The polypeptide is Probable phosphoketolase (Streptomyces coelicolor (strain ATCC BAA-471 / A3(2) / M145)).